The sequence spans 30 residues: Fimbrial assembly protein, serogroup B1 (30 aa).

This is Fimbrial assembly protein, serogroup B1 (fimB) from Dichelobacter nodosus (Bacteroides nodosus).